The primary structure comprises 230 residues: Sugar fermentation stimulation protein homolog (230 aa).

The protein belongs to the SfsA family.

The chain is Sugar fermentation stimulation protein homolog from Clostridium kluyveri (strain NBRC 12016).